A 469-amino-acid polypeptide reads, in one-letter code: Nuclear hormone receptor family member nhr-154 (469 aa).

The segment at residues 80-159 is a DNA-binding region (nuclear receptor); sequence PSKCLVCRNP…VGMNPMAIQA (80 aa). 2 NR C4-type zinc fingers span residues 83–103 and 119–142; these read CLVC…CNGC and CAKQ…CRAC. Residues 230 to 459 form the NR LBD domain; it reads LDSKPVLVVT…KMGTTFRKCI (230 aa).

It belongs to the nuclear hormone receptor family.

Its subcellular location is the nucleus. In terms of biological role, orphan nuclear receptor. The sequence is that of Nuclear hormone receptor family member nhr-154 (nhr-154) from Caenorhabditis elegans.